The sequence spans 406 residues: Arginine biosynthesis bifunctional protein ArgJ (406 aa).

Substrate contacts are provided by Thr156, Lys182, Thr193, Glu279, Asn401, and Thr406. Thr193 (nucleophile) is an active-site residue.

This sequence belongs to the ArgJ family. In terms of assembly, heterotetramer of two alpha and two beta chains.

Its subcellular location is the cytoplasm. The catalysed reaction is N(2)-acetyl-L-ornithine + L-glutamate = N-acetyl-L-glutamate + L-ornithine. It catalyses the reaction L-glutamate + acetyl-CoA = N-acetyl-L-glutamate + CoA + H(+). The protein operates within amino-acid biosynthesis; L-arginine biosynthesis; L-ornithine and N-acetyl-L-glutamate from L-glutamate and N(2)-acetyl-L-ornithine (cyclic): step 1/1. It functions in the pathway amino-acid biosynthesis; L-arginine biosynthesis; N(2)-acetyl-L-ornithine from L-glutamate: step 1/4. With respect to regulation, feedback inhibition by L-arginine. Functionally, catalyzes two activities which are involved in the cyclic version of arginine biosynthesis: the synthesis of N-acetylglutamate from glutamate and acetyl-CoA as the acetyl donor, and of ornithine by transacetylation between N(2)-acetylornithine and glutamate. The chain is Arginine biosynthesis bifunctional protein ArgJ from Bacillus amyloliquefaciens (Bacillus velezensis).